The chain runs to 39 residues: Cytochrome b559 subunit beta (39 aa).

Residues tryptophan 14–serine 30 traverse the membrane as a helical segment. Histidine 18 contacts heme.

The protein belongs to the PsbE/PsbF family. Heterodimer of an alpha subunit and a beta subunit. PSII is composed of 1 copy each of membrane proteins PsbA, PsbB, PsbC, PsbD, PsbE, PsbF, PsbH, PsbI, PsbJ, PsbK, PsbL, PsbM, PsbT, PsbX, PsbY, PsbZ, Psb30/Ycf12, at least 3 peripheral proteins of the oxygen-evolving complex and a large number of cofactors. It forms dimeric complexes. It depends on heme b as a cofactor.

Its subcellular location is the plastid. The protein localises to the chloroplast thylakoid membrane. Its function is as follows. This b-type cytochrome is tightly associated with the reaction center of photosystem II (PSII). PSII is a light-driven water:plastoquinone oxidoreductase that uses light energy to abstract electrons from H(2)O, generating O(2) and a proton gradient subsequently used for ATP formation. It consists of a core antenna complex that captures photons, and an electron transfer chain that converts photonic excitation into a charge separation. In Nicotiana glutinosa (Tobacco), this protein is Cytochrome b559 subunit beta.